Consider the following 345-residue polypeptide: tRNA N6-adenosine threonylcarbamoyltransferase (345 aa).

2 residues coordinate Fe cation: His-111 and His-115. Residues 134–138, Asp-167, Gly-180, and Asn-276 each bind substrate; that span reads LVSGG. Asp-304 serves as a coordination point for Fe cation.

Belongs to the KAE1 / TsaD family. Fe(2+) serves as cofactor.

It localises to the cytoplasm. The catalysed reaction is L-threonylcarbamoyladenylate + adenosine(37) in tRNA = N(6)-L-threonylcarbamoyladenosine(37) in tRNA + AMP + H(+). In terms of biological role, required for the formation of a threonylcarbamoyl group on adenosine at position 37 (t(6)A37) in tRNAs that read codons beginning with adenine. Is involved in the transfer of the threonylcarbamoyl moiety of threonylcarbamoyl-AMP (TC-AMP) to the N6 group of A37, together with TsaE and TsaB. TsaD likely plays a direct catalytic role in this reaction. The chain is tRNA N6-adenosine threonylcarbamoyltransferase from Bordetella avium (strain 197N).